The primary structure comprises 618 residues: V-type proton ATPase catalytic subunit A (618 aa).

Residue 251 to 258 participates in ATP binding; it reads GAFGCGKT.

It belongs to the ATPase alpha/beta chains family. V-ATPase is a heteromultimeric enzyme composed of a peripheral catalytic V1 complex (main components: subunits A, B, C, D, E, and F) attached to an integral membrane V0 proton pore complex (main component: the proteolipid protein).

It catalyses the reaction ATP + H2O + 4 H(+)(in) = ADP + phosphate + 5 H(+)(out). Functionally, catalytic subunit of the peripheral V1 complex of vacuolar ATPase. V-ATPase vacuolar ATPase is responsible for acidifying a variety of intracellular compartments in eukaryotic cells. This chain is V-type proton ATPase catalytic subunit A (vatA), found in Dictyostelium discoideum (Social amoeba).